The chain runs to 196 residues: Interferon lambda-3 (196 aa).

A signal peptide spans 1–21 (MTGDCMPVLVLMAAVLTVTGA). 3 cysteine pairs are disulfide-bonded: Cys37-Cys136, Cys71-Cys169, and Cys188-Cys195.

It belongs to the lambda interferon family.

The protein resides in the secreted. Cytokine with antiviral, antitumour and immunomodulatory activities. Plays a critical role in the antiviral host defense, predominantly in the epithelial tissues. Acts as a ligand for the heterodimeric class II cytokine receptor composed of IL10RB and IFNLR1, and receptor engagement leads to the activation of the JAK/STAT signaling pathway resulting in the expression of IFN-stimulated genes (ISG), which mediate the antiviral state. Has a restricted receptor distribution and therefore restricted targets: is primarily active in epithelial cells and this cell type-selective action is because of the epithelial cell-specific expression of its receptor IFNLR1. Seems not to be essential for early virus-activated host defense in vaginal infection, but plays an important role in Toll-like receptor (TLR)-induced antiviral defense. Plays a significant role in the antiviral immune defense in the intestinal epithelium. Exerts an immunomodulatory effect by up-regulating MHC class I antigen expression. The protein is Interferon lambda-3 (IFNL3) of Homo sapiens (Human).